The chain runs to 116 residues: Large ribosomal subunit protein bL19 (116 aa).

This sequence belongs to the bacterial ribosomal protein bL19 family.

Functionally, this protein is located at the 30S-50S ribosomal subunit interface and may play a role in the structure and function of the aminoacyl-tRNA binding site. The sequence is that of Large ribosomal subunit protein bL19 from Azotobacter vinelandii (strain DJ / ATCC BAA-1303).